A 269-amino-acid polypeptide reads, in one-letter code: Regulatory protein RecX (269 aa).

Belongs to the RecX family.

It localises to the cytoplasm. In terms of biological role, modulates RecA activity. This is Regulatory protein RecX from Geobacillus thermodenitrificans (strain NG80-2).